Reading from the N-terminus, the 769-residue chain is Discoidin, CUB and LCCL domain-containing protein 2 (769 aa).

Residues 1–29 show a composition bias toward low complexity; it reads MASRAPLRAARSPQDPGGRAAPAATGRAP. Residues 1–39 are disordered; it reads MASRAPLRAARSPQDPGGRAAPAATGRAPLPSAGWCPLP. The N-terminal stretch at 1–63 is a signal peptide; sequence MASRAPLRAA…LLLLLPDAGA (63 aa). Over 64-523 the chain is Extracellular; the sequence is QKGDGCGHTV…VTPSVTKDVA (460 aa). 2 cysteine pairs are disulfide-bonded: Cys69–Cys96 and Cys123–Cys145. Residues 69–184 enclose the CUB domain; the sequence is CGHTVLGPES…RGFLASYSVI (116 aa). Asn92 carries N-linked (GlcNAc...) asparagine glycosylation. An N-linked (GlcNAc...) asparagine glycan is attached at Asn152. The LCCL domain occupies 184–282; it reads IDKQDLITCL…MVGYLSTSLF (99 aa). Cysteines 212 and 234 form a disulfide. Asn269 is a glycosylation site (N-linked (GlcNAc...) asparagine). Cys289 and Cys446 form a disulfide bridge. In terms of domain architecture, F5/8 type C spans 289–446; sequence CYGTLGMESG…IAMKVELLGC (158 aa). Residues 455–476 are disordered; it reads PKLTQPPPPRNSNNLKNTTVHP. Positions 465-474 are enriched in polar residues; the sequence is NSNNLKNTTV. 2 N-linked (GlcNAc...) asparagine glycosylation sites follow: Asn471 and Asn511. A helical membrane pass occupies residues 524–544; that stretch reads LAAVLVPVLVMALTTLILILV. At 545 to 769 the chain is on the cytoplasmic side; the sequence is CAWHWRNRKK…EKFDAFKETL (225 aa). Ser601 carries the post-translational modification Phosphoserine. The segment at 719-769 is disordered; the sequence is SCSSGQAQYDTPKGGKPAAAPEELVYQVPQSTQEASGAGRDEKFDAFKETL. Positions 757–769 are enriched in basic and acidic residues; the sequence is GRDEKFDAFKETL.

Its subcellular location is the membrane. The chain is Discoidin, CUB and LCCL domain-containing protein 2 (Dcbld2) from Rattus norvegicus (Rat).